We begin with the raw amino-acid sequence, 344 residues long: Holliday junction branch migration complex subunit RuvB (344 aa).

The large ATPase domain (RuvB-L) stretch occupies residues 1–182 (MRIELLNTPP…FGINSRFDYY (182 aa)). Residues Ile-21, Arg-22, Gly-63, Lys-66, Thr-67, Thr-68, 129-131 (EDF), Arg-172, Tyr-182, and Arg-219 each bind ATP. Residue Thr-67 coordinates Mg(2+). A small ATPAse domain (RuvB-S) region spans residues 183–253 (APELLEGIIR…IAMKTLDCLE (71 aa)). Residues 256-344 (EEGLDDMDKK…ISLFDAQPTS (89 aa)) are head domain (RuvB-H). Residues Arg-311 and Arg-316 each coordinate DNA.

Belongs to the RuvB family. As to quaternary structure, homohexamer. Forms an RuvA(8)-RuvB(12)-Holliday junction (HJ) complex. HJ DNA is sandwiched between 2 RuvA tetramers; dsDNA enters through RuvA and exits via RuvB. An RuvB hexamer assembles on each DNA strand where it exits the tetramer. Each RuvB hexamer is contacted by two RuvA subunits (via domain III) on 2 adjacent RuvB subunits; this complex drives branch migration. In the full resolvosome a probable DNA-RuvA(4)-RuvB(12)-RuvC(2) complex forms which resolves the HJ.

The protein resides in the cytoplasm. It carries out the reaction ATP + H2O = ADP + phosphate + H(+). Its function is as follows. The RuvA-RuvB-RuvC complex processes Holliday junction (HJ) DNA during genetic recombination and DNA repair, while the RuvA-RuvB complex plays an important role in the rescue of blocked DNA replication forks via replication fork reversal (RFR). RuvA specifically binds to HJ cruciform DNA, conferring on it an open structure. The RuvB hexamer acts as an ATP-dependent pump, pulling dsDNA into and through the RuvAB complex. RuvB forms 2 homohexamers on either side of HJ DNA bound by 1 or 2 RuvA tetramers; 4 subunits per hexamer contact DNA at a time. Coordinated motions by a converter formed by DNA-disengaged RuvB subunits stimulates ATP hydrolysis and nucleotide exchange. Immobilization of the converter enables RuvB to convert the ATP-contained energy into a lever motion, pulling 2 nucleotides of DNA out of the RuvA tetramer per ATP hydrolyzed, thus driving DNA branch migration. The RuvB motors rotate together with the DNA substrate, which together with the progressing nucleotide cycle form the mechanistic basis for DNA recombination by continuous HJ branch migration. Branch migration allows RuvC to scan DNA until it finds its consensus sequence, where it cleaves and resolves cruciform DNA. The protein is Holliday junction branch migration complex subunit RuvB of Pelodictyon phaeoclathratiforme (strain DSM 5477 / BU-1).